Here is a 269-residue protein sequence, read N- to C-terminus: Spermatogenesis-associated serine-rich protein 1 (269 aa).

Residues 1–14 show a composition bias toward basic and acidic residues; the sequence is MESSKDTQHGDALE. Residues 1 to 92 form a disordered region; sequence MESSKDTQHG…SKVSLPEIPK (92 aa). Over residues 18-38 the composition is skewed to polar residues; it reads CLANRTSSRQNKRTSLSSSDG. Thr-54 carries the post-translational modification Phosphothreonine. Residues 67–86 show a composition bias toward low complexity; sequence SSSSSSSSSSAQSNRSSKVS. Phosphoserine occurs at positions 72, 75, and 82.

The chain is Spermatogenesis-associated serine-rich protein 1 (Spats1) from Mus musculus (Mouse).